The primary structure comprises 301 residues: (R)-2-haloacid dehalogenase (301 aa).

This sequence belongs to the HAD-like hydrolase superfamily. S-2-haloalkanoic acid dehalogenase family. As to quaternary structure, homotetramer.

The enzyme catalyses an (R)-2-haloacid + H2O = a (2S)-2-hydroxycarboxylate + a halide anion + H(+). Catalyzes the hydrolytic dehalogenation of small (R)-2-haloalkanoic acids to yield the corresponding (S)-2-hydroxyalkanoic acids. Acts on acids of short chain lengths, C(2) to C(4), with inversion of configuration at C-2. The protein is (R)-2-haloacid dehalogenase (hadD) of Pseudomonas putida (Arthrobacter siderocapsulatus).